A 424-amino-acid polypeptide reads, in one-letter code: GTPase Obg (424 aa).

Positions 1–160 (MFDRVEIRIK…YELILELKLI (160 aa)) constitute an Obg domain. The 168-residue stretch at 161–328 (ADVAIIGYPN…LLDKVAEKLA (168 aa)) folds into the OBG-type G domain. Residues 167 to 174 (GYPNVGKS), 192 to 196 (FTTLS), 213 to 216 (EVPG), 280 to 283 (NKID), and 309 to 311 (SAL) contribute to the GTP site. Positions 174 and 194 each coordinate Mg(2+). Residues 349 to 424 (PAPKGKMGFH…IITGRLEWYL (76 aa)) form the OCT domain.

Belongs to the TRAFAC class OBG-HflX-like GTPase superfamily. OBG GTPase family. Monomer. The cofactor is Mg(2+).

It is found in the cytoplasm. Functionally, an essential GTPase which binds GTP, GDP and possibly (p)ppGpp with moderate affinity, with high nucleotide exchange rates and a fairly low GTP hydrolysis rate. Plays a role in control of the cell cycle, stress response, ribosome biogenesis and in those bacteria that undergo differentiation, in morphogenesis control. The polypeptide is GTPase Obg (Dehalococcoides mccartyi (strain ATCC BAA-2266 / KCTC 15142 / 195) (Dehalococcoides ethenogenes (strain 195))).